The primary structure comprises 325 residues: Methionyl-tRNA formyltransferase (325 aa).

111-114 serves as a coordination point for (6S)-5,6,7,8-tetrahydrofolate; that stretch reads SILP.

Belongs to the Fmt family.

It catalyses the reaction L-methionyl-tRNA(fMet) + (6R)-10-formyltetrahydrofolate = N-formyl-L-methionyl-tRNA(fMet) + (6S)-5,6,7,8-tetrahydrofolate + H(+). Its function is as follows. Attaches a formyl group to the free amino group of methionyl-tRNA(fMet). The formyl group appears to play a dual role in the initiator identity of N-formylmethionyl-tRNA by promoting its recognition by IF2 and preventing the misappropriation of this tRNA by the elongation apparatus. The chain is Methionyl-tRNA formyltransferase from Microcystis aeruginosa (strain NIES-843 / IAM M-2473).